The chain runs to 360 residues: NAD(P)H-quinone oxidoreductase subunit 1, chloroplastic (360 aa).

8 helical membrane-spanning segments follow: residues 27-47 (IWIFVPIFSLVLGIITGVLVI), 98-118 (FSIGPSIAVISILLSYSIIPF), 129-149 (IGIFLWIAISSIAPIGLLMSG), 165-185 (AAQSISYEIPLTLCVLSISLL), 203-223 (FWGWNLWRQPIGFIIFLISSL), 253-273 (FGLFYVASYLNLLISSLFVTV), 297-317 (IFGTTIGIFITLAKTYLFLFI), and 340-360 (FLLPISLGNLLLTTSFQLFSL).

The protein belongs to the complex I subunit 1 family. In terms of assembly, NDH is composed of at least 16 different subunits, 5 of which are encoded in the nucleus.

Its subcellular location is the plastid. The protein resides in the chloroplast thylakoid membrane. The catalysed reaction is a plastoquinone + NADH + (n+1) H(+)(in) = a plastoquinol + NAD(+) + n H(+)(out). It catalyses the reaction a plastoquinone + NADPH + (n+1) H(+)(in) = a plastoquinol + NADP(+) + n H(+)(out). Functionally, NDH shuttles electrons from NAD(P)H:plastoquinone, via FMN and iron-sulfur (Fe-S) centers, to quinones in the photosynthetic chain and possibly in a chloroplast respiratory chain. The immediate electron acceptor for the enzyme in this species is believed to be plastoquinone. Couples the redox reaction to proton translocation, and thus conserves the redox energy in a proton gradient. In Lobularia maritima (Sweet alyssum), this protein is NAD(P)H-quinone oxidoreductase subunit 1, chloroplastic.